The following is a 160-amino-acid chain: 6,7-dimethyl-8-ribityllumazine synthase (160 aa).

5-amino-6-(D-ribitylamino)uracil is bound by residues Phe23, 61–63, and 85–87; these read SFE and AVI. Position 90-91 (90-91) interacts with (2S)-2-hydroxy-3-oxobutyl phosphate; the sequence is DT. His93 acts as the Proton donor in catalysis. Phe118 is a 5-amino-6-(D-ribitylamino)uracil binding site. Arg132 is a binding site for (2S)-2-hydroxy-3-oxobutyl phosphate.

This sequence belongs to the DMRL synthase family.

It carries out the reaction (2S)-2-hydroxy-3-oxobutyl phosphate + 5-amino-6-(D-ribitylamino)uracil = 6,7-dimethyl-8-(1-D-ribityl)lumazine + phosphate + 2 H2O + H(+). It participates in cofactor biosynthesis; riboflavin biosynthesis; riboflavin from 2-hydroxy-3-oxobutyl phosphate and 5-amino-6-(D-ribitylamino)uracil: step 1/2. Catalyzes the formation of 6,7-dimethyl-8-ribityllumazine by condensation of 5-amino-6-(D-ribitylamino)uracil with 3,4-dihydroxy-2-butanone 4-phosphate. This is the penultimate step in the biosynthesis of riboflavin. The protein is 6,7-dimethyl-8-ribityllumazine synthase of Synechococcus sp. (strain CC9311).